We begin with the raw amino-acid sequence, 99 residues long: Large ribosomal subunit protein uL23 (99 aa).

Belongs to the universal ribosomal protein uL23 family. Part of the 50S ribosomal subunit. Contacts protein L29, and trigger factor when it is bound to the ribosome.

Its function is as follows. One of the early assembly proteins it binds 23S rRNA. One of the proteins that surrounds the polypeptide exit tunnel on the outside of the ribosome. Forms the main docking site for trigger factor binding to the ribosome. This Shewanella sediminis (strain HAW-EB3) protein is Large ribosomal subunit protein uL23.